A 110-amino-acid polypeptide reads, in one-letter code: MSLTEARFHDLVDATQQNIEDVFDDSGLDVDLENSAGVLTVKFEGGTQLIFSRQEPLRQLWLAARSGGFHFDYDEENQCWACDSSDELLSEMLERFTVEQAGVELDFSEI.

The protein belongs to the frataxin family.

Its function is as follows. Involved in iron-sulfur (Fe-S) cluster assembly. May act as a regulator of Fe-S biogenesis. This chain is Iron-sulfur cluster assembly protein CyaY, found in Pseudomonas syringae pv. syringae (strain B728a).